We begin with the raw amino-acid sequence, 194 residues long: 7-methyl-GTP pyrophosphatase (194 aa).

The active-site Proton acceptor is Asp70.

The protein belongs to the Maf family. YceF subfamily. A divalent metal cation is required as a cofactor.

The protein resides in the cytoplasm. It catalyses the reaction N(7)-methyl-GTP + H2O = N(7)-methyl-GMP + diphosphate + H(+). Nucleoside triphosphate pyrophosphatase that hydrolyzes 7-methyl-GTP (m(7)GTP). May have a dual role in cell division arrest and in preventing the incorporation of modified nucleotides into cellular nucleic acids. In Vibrio vulnificus (strain YJ016), this protein is 7-methyl-GTP pyrophosphatase.